A 314-amino-acid polypeptide reads, in one-letter code: Lipoyl synthase (314 aa).

Positions 67, 72, 78, 93, 97, 100, and 306 each coordinate [4Fe-4S] cluster. The Radical SAM core domain maps to 79–295 (FNRGTATFMI…KNYALSIGFK (217 aa)).

This sequence belongs to the radical SAM superfamily. Lipoyl synthase family. Requires [4Fe-4S] cluster as cofactor.

The protein localises to the cytoplasm. It carries out the reaction [[Fe-S] cluster scaffold protein carrying a second [4Fe-4S](2+) cluster] + N(6)-octanoyl-L-lysyl-[protein] + 2 oxidized [2Fe-2S]-[ferredoxin] + 2 S-adenosyl-L-methionine + 4 H(+) = [[Fe-S] cluster scaffold protein] + N(6)-[(R)-dihydrolipoyl]-L-lysyl-[protein] + 4 Fe(3+) + 2 hydrogen sulfide + 2 5'-deoxyadenosine + 2 L-methionine + 2 reduced [2Fe-2S]-[ferredoxin]. It participates in protein modification; protein lipoylation via endogenous pathway; protein N(6)-(lipoyl)lysine from octanoyl-[acyl-carrier-protein]: step 2/2. Catalyzes the radical-mediated insertion of two sulfur atoms into the C-6 and C-8 positions of the octanoyl moiety bound to the lipoyl domains of lipoate-dependent enzymes, thereby converting the octanoylated domains into lipoylated derivatives. This is Lipoyl synthase from Buchnera aphidicola subsp. Baizongia pistaciae (strain Bp).